Here is a 165-residue protein sequence, read N- to C-terminus: Putative type II restriction enzyme and methyltransferase RM.MpnORF109P N-terminus (165 aa).

Functionally, corresponds to the N-terminus of a putative G subtype type II restriction/methylase subunit. In Mycoplasma pneumoniae (strain ATCC 29342 / M129 / Subtype 1) (Mycoplasmoides pneumoniae), this protein is Putative type II restriction enzyme and methyltransferase RM.MpnORF109P N-terminus.